The primary structure comprises 960 residues: Gamma-aminobutyric acid type B receptor subunit 1 (960 aa).

Residues 1–19 (MLLLLLVPLFLRPLGAGGA) form the signal peptide. Topologically, residues 20–590 (QTPNATSEGC…KTFRFLSQKL (571 aa)) are extracellular. Residues Asn-23 and Asn-83 are each glycosylated (N-linked (GlcNAc...) asparagine). 2 consecutive Sushi domains span residues 29 to 95 (CQII…PSRC) and 97 to 158 (RICS…HCQV). 3 disulfides stabilise this stretch: Cys-99–Cys-144, Cys-130–Cys-156, and Cys-219–Cys-245. 4-aminobutanoate-binding residues include Ser-246, Ser-269, His-286, and Tyr-366. The cysteines at positions 375 and 409 are disulfide-linked. N-linked (GlcNAc...) asparagine glycosylation is found at Asn-408 and Asn-439. Glu-465 lines the 4-aminobutanoate pocket. Asn-481, Asn-501, and Asn-513 each carry an N-linked (GlcNAc...) asparagine glycan. A helical membrane pass occupies residues 591-611 (FISVSVLSSLGIVLAVVCLSF). Over 612 to 630 (NIYNSHVRYIQNSQPNLNN) the chain is Cytoplasmic. Residues 631–651 (LTAVGCSLALAAVFPLGLDGY) form a helical membrane-spanning segment. The Extracellular segment spans residues 652–666 (HIGRSQFPFVCQARL). The chain crosses the membrane as a helical span at residues 667 to 687 (WLLGLGFSLGYGSMFTKIWWV). Residues 688-709 (HTVFTKKEEKKEWRKTLEPWKL) are Cytoplasmic-facing. A helical transmembrane segment spans residues 710-730 (YATVGLLVGMDVLTLAIWQIV). Topologically, residues 731 to 767 (DPLHRTIETFAKEEPKEDIDVSILPQLEHCSSKKMNT) are extracellular. Residues 768-788 (WLGIFYGYKGLLLLLGIFLAY) form a helical membrane-spanning segment. Residues 789 to 803 (ETKSVSTEKINDHRA) lie on the Cytoplasmic side of the membrane. A helical transmembrane segment spans residues 804–824 (VGMAIYNVAVLCLITAPVTMI). Residues 825 to 832 (LSSQQDAA) are Extracellular-facing. A helical transmembrane segment spans residues 833 to 853 (FAFASLAIVFSSYITLVVLFV). The Cytoplasmic segment spans residues 854 to 960 (PKMRRLITRG…DGSRVHLLYK (107 aa)). Over residues 866–879 (QSETQDTMKTGSST) the composition is skewed to polar residues. Disordered regions lie at residues 866–891 (QSET…RLLE) and 908–960 (VSEL…LLYK). Residues 870 to 924 (QDTMKTGSSTNNNEEEKSRLLEKENRELEKIIAEKEERVSELRHQLQSRQQLRSR) are a coiled coil. At Thr-872 the chain carries Phosphothreonine. The segment at 887-915 (SRLLEKENRELEKIIAEKEERVSELRHQL) is interaction with ATF4. Residue Thr-929 is modified to Phosphothreonine.

It belongs to the G-protein coupled receptor 3 family. GABA-B receptor subfamily. In terms of assembly, heterodimer of GABBR1 and GABBR2. Homodimers may form, but are inactive. Interacts (via C-terminus) with ATF4 (via leucine zipper domain). Interacts with JAKMIP1. In terms of tissue distribution, ubiquitously expressed in tissues including the forebrain, cerebellum, eye, atrium, ventricle, lung, stomach, small intestine, colon, liver, spleen, kidney, urinary bladder and skeletal muscle. Expressed at low levels in testis, and more highly in brain regions. Expression is high the brain regions including cerebral cortical layers, with higher expression in VIb than in the II-V layers, pyramidal CA1-CA3 cell layers and granular cell layers of the hippocampus, granular cell layers of the dentate gyrus, including the caudate, putamen, nucleus accumbens and olfactory tubercle, the granular layer cell layers of the medial habenula, in the cerebellum, predominantly in Purkinje cells, and in the granule cell layer. Also expressed in areas of the brain including the medial geniculate nucleus, substantia nigra, pars compacta, the ventral tegmental area, and in several thalamic, amygdaloid and hypothalamic nuclei, such as the arcuate nucleus of the hypothalamus and mammilary bodies of the hypothalamus. Expressed in the amacrine cell of the retina. As to expression, expressed in the brain, spinal cord, stomach, testis, adrenal gland, pituitary, spleen and prostate. Expressed in the brain, spinal cord, stomach, testis, kidney and liver. In terms of tissue distribution, ubiquitously expressed. As to expression, expressed in the forebrain, cerebellum, eye, kidney and urinary bladder. Ubiquitously expressed with high expression in the pyramidal CA1-CA3 cell layers of the hippocampus, the granule cell layers of the dentate gyrus and olfactory tubercle, the whole cortex, and Purkinje cells of the cerebellum. Moderate expression in the granule cell layer of the cerebellum.

Its subcellular location is the cell membrane. It is found in the postsynaptic cell membrane. It localises to the cell projection. The protein localises to the dendrite. The protein resides in the perikaryon. Functionally, component of a heterodimeric G-protein coupled receptor for GABA, formed by GABBR1 and GABBR2. Within the heterodimeric GABA receptor, only GABBR1 seems to bind agonists, while GABBR2 mediates coupling to G proteins. Ligand binding causes a conformation change that triggers signaling via guanine nucleotide-binding proteins (G proteins) and modulates the activity of down-stream effectors, such as adenylate cyclase. Signaling inhibits adenylate cyclase, stimulates phospholipase A2, activates potassium channels, inactivates voltage-dependent calcium-channels and modulates inositol phospholipid hydrolysis. Calcium is required for high affinity binding to GABA. Plays a critical role in the fine-tuning of inhibitory synaptic transmission. Pre-synaptic GABA receptor inhibits neurotransmitter release by down-regulating high-voltage activated calcium channels, whereas postsynaptic GABA receptor decreases neuronal excitability by activating a prominent inwardly rectifying potassium (Kir) conductance that underlies the late inhibitory postsynaptic potentials. Not only implicated in synaptic inhibition but also in hippocampal long-term potentiation, slow wave sleep, muscle relaxation and antinociception. The polypeptide is Gamma-aminobutyric acid type B receptor subunit 1 (Gabbr1) (Rattus norvegicus (Rat)).